The following is a 249-amino-acid chain: Probable phosphatase VVA0289 (249 aa).

Zn(2+) contacts are provided by H8, H10, H16, H41, E74, H102, H132, D194, and H196.

It belongs to the PHP family. It depends on Zn(2+) as a cofactor.

The sequence is that of Probable phosphatase VVA0289 from Vibrio vulnificus (strain YJ016).